Here is a 456-residue protein sequence, read N- to C-terminus: tRNA-2-methylthio-N(6)-dimethylallyladenosine synthase (456 aa).

Residues 18-134 (KKLFIETYGC…LPDLVASVEA (117 aa)) enclose the MTTase N-terminal domain. Residues Cys27, Cys63, Cys98, Cys172, Cys176, and Cys179 each contribute to the [4Fe-4S] cluster site. One can recognise a Radical SAM core domain in the interval 158-390 (CGNHISGFVS…IELQNRLSAE (233 aa)). One can recognise a TRAM domain in the interval 393-456 (ARDVGKTFEV…SATLKGEEVF (64 aa)).

Belongs to the methylthiotransferase family. MiaB subfamily. Monomer. [4Fe-4S] cluster is required as a cofactor.

The protein localises to the cytoplasm. The catalysed reaction is N(6)-dimethylallyladenosine(37) in tRNA + (sulfur carrier)-SH + AH2 + 2 S-adenosyl-L-methionine = 2-methylsulfanyl-N(6)-dimethylallyladenosine(37) in tRNA + (sulfur carrier)-H + 5'-deoxyadenosine + L-methionine + A + S-adenosyl-L-homocysteine + 2 H(+). In terms of biological role, catalyzes the methylthiolation of N6-(dimethylallyl)adenosine (i(6)A), leading to the formation of 2-methylthio-N6-(dimethylallyl)adenosine (ms(2)i(6)A) at position 37 in tRNAs that read codons beginning with uridine. In Phocaeicola vulgatus (strain ATCC 8482 / DSM 1447 / JCM 5826 / CCUG 4940 / NBRC 14291 / NCTC 11154) (Bacteroides vulgatus), this protein is tRNA-2-methylthio-N(6)-dimethylallyladenosine synthase.